A 102-amino-acid chain; its full sequence is Circadian clock protein KaiB3 (102 aa).

The protein belongs to the KaiB family. In terms of assembly, purifies as a monomer and homotetramer. Interacts with KaiC1 and KaiC3.

A paralog of KaiB1, the major clock oscillator protein in this species. KaiB3 and KaiC3 may cross talk with the core oscillator. The monomer reduces the ATPase activity of KaiC3 by 55%, the homotetramer has no effect. In terms of biological role, a metamorphic protein which may reversibly switch between an inactive tetrameric fold and a rare thioredoxin-like monomeric fold (KaiB(fs)). This Synechocystis sp. (strain ATCC 27184 / PCC 6803 / Kazusa) protein is Circadian clock protein KaiB3.